The primary structure comprises 38 residues: Putative defensin-like protein 105 (38 aa).

Cystine bridges form between Cys-5/Cys-27, Cys-13/Cys-33, and Cys-17/Cys-34.

This sequence belongs to the DEFL family.

This chain is Putative defensin-like protein 105, found in Arabidopsis thaliana (Mouse-ear cress).